The primary structure comprises 117 residues: G antigen 6 (117 aa).

A disordered region spans residues 1–117 (MSWRGRSTYY…PEEGEKQSQC (117 aa)). Composition is skewed to acidic residues over residues 32-45 (FSDEVEPATPEEGE) and 87-96 (ECEDGPDGQE). Residues 103 to 117 (EEVKTPEEGEKQSQC) show a composition bias toward basic and acidic residues.

It belongs to the GAGE family. In terms of tissue distribution, expressed in a variety of tumor tissues but not in normal tissues, except testis.

The sequence is that of G antigen 6 (GAGE6) from Homo sapiens (Human).